Here is a 307-residue protein sequence, read N- to C-terminus: Putative serine/threonine-protein phosphatase C22H10.04 (307 aa).

Positions 51, 53, 79, and 111 each coordinate Mn(2+). Histidine 112 (proton donor) is an active-site residue. Histidine 161 and histidine 236 together coordinate Mn(2+).

Belongs to the PPP phosphatase family. PP-X subfamily. The cofactor is Mn(2+).

It catalyses the reaction O-phospho-L-seryl-[protein] + H2O = L-seryl-[protein] + phosphate. The catalysed reaction is O-phospho-L-threonyl-[protein] + H2O = L-threonyl-[protein] + phosphate. This Schizosaccharomyces pombe (strain 972 / ATCC 24843) (Fission yeast) protein is Putative serine/threonine-protein phosphatase C22H10.04.